We begin with the raw amino-acid sequence, 339 residues long: Fructose-1,6-bisphosphatase class 1 (339 aa).

The Mg(2+) site is built by Glu94, Asp116, Leu118, and Asp119. Residues 119-122 (DGSS), Asn210, and Lys276 contribute to the substrate site. Glu282 provides a ligand contact to Mg(2+).

Belongs to the FBPase class 1 family. Homotetramer. Mg(2+) is required as a cofactor.

The protein resides in the cytoplasm. It carries out the reaction beta-D-fructose 1,6-bisphosphate + H2O = beta-D-fructose 6-phosphate + phosphate. It participates in carbohydrate biosynthesis; gluconeogenesis. The polypeptide is Fructose-1,6-bisphosphatase class 1 (Burkholderia ambifaria (strain ATCC BAA-244 / DSM 16087 / CCUG 44356 / LMG 19182 / AMMD) (Burkholderia cepacia (strain AMMD))).